A 181-amino-acid chain; its full sequence is 28 kDa heat- and acid-stable phosphoprotein (181 aa).

The span at 1-14 (MPKGGRKGGHKGRV) shows a compositional bias: basic residues. The segment at 1 to 118 (MPKGGRKGGH…RREREEIEKQ (118 aa)) is disordered. Residue Thr18 is modified to Phosphothreonine. Position 19 is a phosphoserine (Ser19). The segment covering 50–59 (DPKKEKKSLD) has biased composition (basic and acidic residues). Lys52 is covalently cross-linked (Glycyl lysine isopeptide (Lys-Gly) (interchain with G-Cter in SUMO2)). Phosphoserine is present on residues Ser57, Ser60, and Ser63. Over residues 60–69 (SDESEDEDDD) the composition is skewed to acidic residues. Tyr70 carries the post-translational modification Phosphotyrosine. A compositionally biased stretch (basic and acidic residues) spans 102-118 (DGPKELSRREREEIEKQ). The residue at position 126 (Lys126) is an N6-methyllysine. An N6-acetyllysine mark is found at Lys132 and Lys164. Residues 151-167 (EEAARKKEEERKAKDDA) are compositionally biased toward basic and acidic residues. Residues 151 to 181 (EEAARKKEEERKAKDDATLSGKRMQSLSLNK) form a disordered region. A phosphoserine mark is found at Ser176 and Ser178.

The protein belongs to the PDAP1 family. In terms of processing, phosphorylated by several kinases in vitro. In vivo, can be phosphorylated by CK2. In terms of tissue distribution, present in all tissues tested, including brain, lung, spleen, kidney, liver, heart, and muscle, in decreasing order of abundance.

The chain is 28 kDa heat- and acid-stable phosphoprotein (Pdap1) from Rattus norvegicus (Rat).